The following is a 370-amino-acid chain: 3-dehydroquinate synthase (370 aa).

Residues G112 to D116, T136 to S137, K149, K158, and T176 to T179 contribute to the NAD(+) site. Zn(2+) is bound by residues E191, H254, and H276.

It belongs to the sugar phosphate cyclases superfamily. Dehydroquinate synthase family. Requires Co(2+) as cofactor. The cofactor is Zn(2+). NAD(+) serves as cofactor.

The protein localises to the cytoplasm. The catalysed reaction is 7-phospho-2-dehydro-3-deoxy-D-arabino-heptonate = 3-dehydroquinate + phosphate. The protein operates within metabolic intermediate biosynthesis; chorismate biosynthesis; chorismate from D-erythrose 4-phosphate and phosphoenolpyruvate: step 2/7. Its function is as follows. Catalyzes the conversion of 3-deoxy-D-arabino-heptulosonate 7-phosphate (DAHP) to dehydroquinate (DHQ). The polypeptide is 3-dehydroquinate synthase (Xanthomonas campestris pv. campestris (strain 8004)).